Reading from the N-terminus, the 109-residue chain is uncharacterized protein (109 aa).

An N-terminal signal peptide occupies residues 1–22 (MKRFPLFLLFTLLTLSTVPAQA). The interval 39–109 (AYNPDRGRDY…ERRMEDEYGR (71 aa)) is disordered. Over residues 41–109 (NPDRGRDYED…ERRMEDEYGR (69 aa)) the composition is skewed to basic and acidic residues.

This is an uncharacterized protein from Escherichia coli O6:H1 (strain CFT073 / ATCC 700928 / UPEC).